The following is a 694-amino-acid chain: MALLLVSLLAFLGSGAGCHHWLCHCSDRVFLCQDSKVTEIPPDLPRNAIELRFVLTKLRVIPQGSFSGFKDLEKIEISQNDVLEVIEADVFSNLPKLHEIRIERANTLLYINPEAFQNLPNLRYLLISNTGIKHLPVVHKIQSLQKVLLDIQDNINLHTIARNSFMGLSFDSLILWLNKNGIQEIHNCAFNGTQLDELNLSDNNNLEELPNDVFRGASGPVILDISRTKVHSLPSHGLENLKKLRARSTYSLKKLPSLDKFVTLVEASLTYPSHCCAFANWRRQISELHPLCNKSVLRQDIDYVTQARDQNTSLIDDDLSYGKETDMMYSEFDYDLCNEVIDVTCSPKPDAFNPCEDIMGYNILRVLIWFISILAITGNITVLVILTTSQYKLTVPRFLMCNLAFADLCIGIYLLPIASVDIHTKSQYHNYAIDWQTAVGCDAAGFFTAFASELSVYTLTAIPLERWHTITHAMQLERKVQLRHAASVMVMGWVFAFAAALLPIFGVSSYMKVSICLPIDIDSPLSQLYVMALLVLNVLAFVVICGCYTHIYLTVRNPNIVSSSSDTKIAKRMATLIFTDFLCMAPISLFAISASLKAPLITVSKAKILLVLFYPINSCANPFLYAIFTKNFRRDFFILMGKFGCYEMQAQIYRTETSSTAHNFHSRKGHCPSAPRVTNSSSYMLVPLSQSAHN.

Positions 1–17 (MALLLVSLLAFLGSGAG) are cleaved as a signal peptide. 2 disulfides stabilise this stretch: Cys18/Cys25 and Cys23/Cys32. The 29-residue stretch at 18-46 (CHHWLCHCSDRVFLCQDSKVTEIPPDLPR) folds into the LRRNT domain. Topologically, residues 18–365 (CHHWLCHCSD…EDIMGYNILR (348 aa)) are extracellular. LRR repeat units lie at residues 49–72 (IELR…FKDL), 73–97 (EKIE…LPKL), 98–118 (HEIR…AFQN), 119–143 (LPNL…KIQS), 144–169 (LQKV…MGLS), 170–192 (FDSL…AFNG), 193–216 (TQLD…VFRG), 217–240 (ASGP…GLEN), and 241–259 (LKKL…PSLD). Asn191 and Asn199 each carry an N-linked (GlcNAc...) asparagine glycan. 4 disulfide bridges follow: Cys275-Cys345, Cys276-Cys292, Cys276-Cys355, and Cys292-Cys337. 2 N-linked (GlcNAc...) asparagine glycosylation sites follow: Asn293 and Asn311. The helical transmembrane segment at 366–386 (VLIWFISILAITGNITVLVIL) threads the bilayer. Residues 387-397 (TTSQYKLTVPR) are Cytoplasmic-facing. A helical membrane pass occupies residues 398-420 (FLMCNLAFADLCIGIYLLPIASV). Over 421–442 (DIHTKSQYHNYAIDWQTAVGCD) the chain is Extracellular. Residues Cys441 and Cys516 are joined by a disulfide bond. The helical transmembrane segment at 443 to 464 (AAGFFTAFASELSVYTLTAIPL) threads the bilayer. The Cytoplasmic segment spans residues 465–484 (ERWHTITHAMQLERKVQLRH). A helical membrane pass occupies residues 485 to 507 (AASVMVMGWVFAFAAALLPIFGV). Over 508–527 (SSYMKVSICLPIDIDSPLSQ) the chain is Extracellular. A helical membrane pass occupies residues 528 to 549 (LYVMALLVLNVLAFVVICGCYT). The Cytoplasmic segment spans residues 550-572 (HIYLTVRNPNIVSSSSDTKIAKR). The helical transmembrane segment at 573–596 (MATLIFTDFLCMAPISLFAISASL) threads the bilayer. Over 597–607 (KAPLITVSKAK) the chain is Extracellular. A helical membrane pass occupies residues 608–629 (ILLVLFYPINSCANPFLYAIFT). Residues 630–694 (KNFRRDFFIL…LVPLSQSAHN (65 aa)) are Cytoplasmic-facing.

This sequence belongs to the G-protein coupled receptor 1 family. FSH/LSH/TSH subfamily. In terms of assembly, homotrimer. Functions as a homotrimer binding the FSH hormone heterodimer composed of CGA and FSHB. Interacts with ARRB2. Interacts with APPL2; interaction is independent of follicle stimulating hormone stimulation. In terms of processing, N-glycosylated; indirectly required for FSH-binding, possibly via a conformational change that allows high affinity binding of hormone.

Its subcellular location is the cell membrane. G protein-coupled receptor for follitropin, the follicle-stimulating hormone. Through cAMP production activates the downstream PI3K-AKT and ERK1/ERK2 signaling pathways. The chain is Follicle-stimulating hormone receptor (FSHR) from Mesocricetus auratus (Golden hamster).